We begin with the raw amino-acid sequence, 31 residues long: GTIPCGESCVYIPCITSALGCSCKKKVCYKN.

Positions 1 to 31 (GTIPCGESCVYIPCITSALGCSCKKKVCYKN) form a cross-link, cyclopeptide (Gly-Asn). Cystine bridges form between C5–C21, C9–C23, and C14–C28.

Belongs to the cyclotide family. Bracelet subfamily. Post-translationally, this is a cyclic peptide.

In terms of biological role, probably participates in a plant defense mechanism. This Melicytus dentatus (Tree violet) protein is Cyclotide mden-M.